The chain runs to 171 residues: Myosin regulatory light chain 12A (171 aa).

Thr18 carries the post-translational modification Phosphothreonine; by MLCK. A Phosphoserine; by MLCK modification is found at Ser19. EF-hand domains follow at residues 28–63 (SQIQ…LGKN), 97–132 (DPED…MGDR), and 133–168 (FTDE…GAKD). The Ca(2+) site is built by Asp41, Asn43, Asp45, and Asp52.

As to quaternary structure, myosin is a hexamer of 2 heavy chains and 4 light chains. Phosphorylation increases the actin-activated myosin ATPase activity and thereby regulates the contractile activity. It is required to generate the driving force in the migration of the cells but not necessary for localization of myosin-2 at the leading edge.

Its function is as follows. Myosin regulatory subunit that plays an important role in regulation of both smooth muscle and nonmuscle cell contractile activity via its phosphorylation. Implicated in cytokinesis, receptor capping, and cell locomotion. This is Myosin regulatory light chain 12A (MYL12A) from Homo sapiens (Human).